The following is a 167-amino-acid chain: Ribosome maturation factor RimM (167 aa).

One can recognise a PRC barrel domain in the interval 94–165 (ENEFYYSDII…KIIITPMEGL (72 aa)).

Belongs to the RimM family. Binds ribosomal protein uS19.

The protein resides in the cytoplasm. Its function is as follows. An accessory protein needed during the final step in the assembly of 30S ribosomal subunit, possibly for assembly of the head region. Essential for efficient processing of 16S rRNA. May be needed both before and after RbfA during the maturation of 16S rRNA. It has affinity for free ribosomal 30S subunits but not for 70S ribosomes. The sequence is that of Ribosome maturation factor RimM from Staphylococcus aureus (strain MRSA252).